Here is a 551-residue protein sequence, read N- to C-terminus: Glucans biosynthesis protein D (551 aa).

Residues 1-32 (MNRRRFIKGSMAMAAVCGSSGIASLFSQAAFA) constitute a signal peptide (tat-type signal).

Belongs to the OpgD/OpgG family. In terms of processing, predicted to be exported by the Tat system. The position of the signal peptide cleavage has not been experimentally proven.

Its subcellular location is the periplasm. The protein operates within glycan metabolism; osmoregulated periplasmic glucan (OPG) biosynthesis. Probably involved in the control of the structural glucose backbone of osmoregulated periplasmic glucans (OPGs). In Salmonella enteritidis PT4 (strain P125109), this protein is Glucans biosynthesis protein D.